The primary structure comprises 158 residues: MTTIPITKRGAEKLKQELHHLKTVERPSVITAIAEARAQGDLSENADYDAAKDRQGFVEGRIQEIEGKLSVAQVIDPGEVDGGGKVVFGATVQLEDEESGDTVTYQIVGEDEADLKQGLINISSPIARALIGKEEGDTAEVQAPSGIRRYEVVAVSYR.

This sequence belongs to the GreA/GreB family.

Functionally, necessary for efficient RNA polymerase transcription elongation past template-encoded arresting sites. The arresting sites in DNA have the property of trapping a certain fraction of elongating RNA polymerases that pass through, resulting in locked ternary complexes. Cleavage of the nascent transcript by cleavage factors such as GreA or GreB allows the resumption of elongation from the new 3'terminus. GreA releases sequences of 2 to 3 nucleotides. The sequence is that of Transcription elongation factor GreA from Verminephrobacter eiseniae (strain EF01-2).